The primary structure comprises 282 residues: NADPH-dependent 7-cyano-7-deazaguanine reductase (282 aa).

Ile88–Ser90 contributes to the substrate binding site. Ser90–Lys91 serves as a coordination point for NADPH. Cys190 acts as the Thioimide intermediate in catalysis. The Proton donor role is filled by Asp197. Substrate is bound at residue His229–Glu230. Arg258–Gly259 is an NADPH binding site.

The protein belongs to the GTP cyclohydrolase I family. QueF type 2 subfamily. Homodimer.

The protein localises to the cytoplasm. It carries out the reaction 7-aminomethyl-7-carbaguanine + 2 NADP(+) = 7-cyano-7-deazaguanine + 2 NADPH + 3 H(+). Its pathway is tRNA modification; tRNA-queuosine biosynthesis. Functionally, catalyzes the NADPH-dependent reduction of 7-cyano-7-deazaguanine (preQ0) to 7-aminomethyl-7-deazaguanine (preQ1). This chain is NADPH-dependent 7-cyano-7-deazaguanine reductase, found in Escherichia coli O127:H6 (strain E2348/69 / EPEC).